A 536-amino-acid chain; its full sequence is Arylsulfatase (536 aa).

Aspartate 13, aspartate 14, and cysteine 51 together coordinate Ca(2+). The active-site Nucleophile is the cysteine 51. The residue at position 51 (cysteine 51) is a 3-oxoalanine (Cys). Histidine 115 is a catalytic residue. Positions 317 and 318 each coordinate Ca(2+).

The protein belongs to the sulfatase family. Monomer. Ca(2+) is required as a cofactor. In terms of processing, the conversion to 3-oxoalanine (also known as C-formylglycine, FGly), of a serine or cysteine residue in prokaryotes and of a cysteine residue in eukaryotes, is critical for catalytic activity.

The protein resides in the cytoplasm. The enzyme catalyses an aryl sulfate + H2O = a phenol + sulfate + H(+). Hydrolyzes the bond between sulfate and the aromatic ring in a compound such as 4-nitrocatechol sulfate. In Pseudomonas aeruginosa (strain ATCC 15692 / DSM 22644 / CIP 104116 / JCM 14847 / LMG 12228 / 1C / PRS 101 / PAO1), this protein is Arylsulfatase (atsA).